The following is a 133-amino-acid chain: Snaclec A9 (133 aa).

Intrachain disulfides connect C4–C15, C32–C131, and C106–C123. One can recognise a C-type lectin domain in the interval 11-132 (YEGHCYKVFN…CGQPYRFTCE (122 aa)).

It belongs to the snaclec family. Heterodimer; disulfide-linked. In terms of tissue distribution, expressed by the venom gland.

It localises to the secreted. Interferes with one step of hemostasis (modulation of platelet aggregation, or coagulation cascade, for example). The polypeptide is Snaclec A9 (Macrovipera lebetinus (Levantine viper)).